A 146-amino-acid polypeptide reads, in one-letter code: Transcription antitermination protein NusB (146 aa).

The protein belongs to the NusB family.

Functionally, involved in transcription antitermination. Required for transcription of ribosomal RNA (rRNA) genes. Binds specifically to the boxA antiterminator sequence of the ribosomal RNA (rrn) operons. The chain is Transcription antitermination protein NusB from Koribacter versatilis (strain Ellin345).